A 242-amino-acid chain; its full sequence is Small ribosomal subunit protein uS3 (242 aa).

Residues 39 to 110 enclose the KH type-2 domain; sequence IRKFIHKKYG…QVRINVVEVE (72 aa). The segment at 221–242 is disordered; that stretch reads GASPRRRASRRPQQFEDRSNEG. The segment covering 233-242 has biased composition (basic and acidic residues); it reads QQFEDRSNEG.

This sequence belongs to the universal ribosomal protein uS3 family. In terms of assembly, part of the 30S ribosomal subunit. Forms a tight complex with proteins S10 and S14.

Its function is as follows. Binds the lower part of the 30S subunit head. Binds mRNA in the 70S ribosome, positioning it for translation. In Parasynechococcus marenigrum (strain WH8102), this protein is Small ribosomal subunit protein uS3.